The following is a 662-amino-acid chain: Transcription activator of gluconeogenesis NECHADRAFT_59099 (662 aa).

Positions methionine 1–lysine 61 are disordered. Composition is skewed to basic and acidic residues over residues threonine 25–threonine 34 and threonine 43–arginine 56. The zn(2)-C6 fungal-type DNA-binding region spans cysteine 66–cysteine 94. Disordered stretches follow at residues leucine 105–asparagine 149, tyrosine 502–proline 524, and tyrosine 580–valine 606. 2 stretches are compositionally biased toward polar residues: residues tyrosine 121–threonine 130 and serine 137–asparagine 149. The PAS domain occupies threonine 448–glycine 519. A compositionally biased stretch (basic and acidic residues) spans alanine 582 to serine 593.

The protein belongs to the ERT1/acuK family.

It localises to the nucleus. Functionally, transcription factor which regulates nonfermentable carbon utilization. Activator of gluconeogenetic genes. In Fusarium vanettenii (strain ATCC MYA-4622 / CBS 123669 / FGSC 9596 / NRRL 45880 / 77-13-4) (Fusarium solani subsp. pisi), this protein is Transcription activator of gluconeogenesis NECHADRAFT_59099.